Here is a 454-residue protein sequence, read N- to C-terminus: tRNA modification GTPase MnmE (454 aa).

(6S)-5-formyl-5,6,7,8-tetrahydrofolate contacts are provided by Arg-26, Glu-84, and Lys-123. The 160-residue stretch at 219 to 378 (GLQVVIAGKP…LVDAITAHAG (160 aa)) folds into the TrmE-type G domain. Asn-229 serves as a coordination point for K(+). Residues 229 to 234 (NAGKSS), 248 to 254 (TDIAGTT), and 273 to 276 (DTAG) contribute to the GTP site. Mg(2+) is bound at residue Ser-233. Residues Thr-248, Ile-250, and Thr-253 each coordinate K(+). Thr-254 provides a ligand contact to Mg(2+). Position 454 (Lys-454) interacts with (6S)-5-formyl-5,6,7,8-tetrahydrofolate.

Belongs to the TRAFAC class TrmE-Era-EngA-EngB-Septin-like GTPase superfamily. TrmE GTPase family. In terms of assembly, homodimer. Heterotetramer of two MnmE and two MnmG subunits. Requires K(+) as cofactor.

The protein resides in the cytoplasm. In terms of biological role, exhibits a very high intrinsic GTPase hydrolysis rate. Involved in the addition of a carboxymethylaminomethyl (cmnm) group at the wobble position (U34) of certain tRNAs, forming tRNA-cmnm(5)s(2)U34. This is tRNA modification GTPase MnmE from Acinetobacter baumannii (strain ATCC 17978 / DSM 105126 / CIP 53.77 / LMG 1025 / NCDC KC755 / 5377).